A 234-amino-acid polypeptide reads, in one-letter code: Triosephosphate isomerase (234 aa).

A substrate-binding site is contributed by 8–10 (NFK). The active-site Electrophile is the histidine 90. Glutamate 159 serves as the catalytic Proton acceptor. Substrate is bound by residues glycine 165 and serine 197.

Belongs to the triosephosphate isomerase family. In terms of assembly, homodimer.

The protein localises to the cytoplasm. It catalyses the reaction D-glyceraldehyde 3-phosphate = dihydroxyacetone phosphate. The protein operates within carbohydrate biosynthesis; gluconeogenesis. It participates in carbohydrate degradation; glycolysis; D-glyceraldehyde 3-phosphate from glycerone phosphate: step 1/1. Functionally, involved in the gluconeogenesis. Catalyzes stereospecifically the conversion of dihydroxyacetone phosphate (DHAP) to D-glyceraldehyde-3-phosphate (G3P). The chain is Triosephosphate isomerase from Helicobacter pylori (strain P12).